Here is a 114-residue protein sequence, read N- to C-terminus: Aspartate 1-decarboxylase (114 aa).

The active-site Schiff-base intermediate with substrate; via pyruvic acid is Ser25. Ser25 is modified (pyruvic acid (Ser)). Thr57 contacts substrate. Tyr58 (proton donor) is an active-site residue. Substrate is bound at residue 71–73 (GAA).

It belongs to the PanD family. In terms of assembly, heterooctamer of four alpha and four beta subunits. The cofactor is pyruvate. Post-translationally, is synthesized initially as an inactive proenzyme, which is activated by self-cleavage at a specific serine bond to produce a beta-subunit with a hydroxyl group at its C-terminus and an alpha-subunit with a pyruvoyl group at its N-terminus.

It is found in the cytoplasm. The enzyme catalyses L-aspartate + H(+) = beta-alanine + CO2. It participates in cofactor biosynthesis; (R)-pantothenate biosynthesis; beta-alanine from L-aspartate: step 1/1. Its function is as follows. Catalyzes the pyruvoyl-dependent decarboxylation of aspartate to produce beta-alanine. This is Aspartate 1-decarboxylase from Haloquadratum walsbyi (strain DSM 16790 / HBSQ001).